The following is a 461-amino-acid chain: D-phenylhydantoinase (461 aa).

The a divalent metal cation site is built by His-59, His-61, and Lys-151. Lys-151 carries the N6-carboxylysine modification. Residue Tyr-156 participates in substrate binding. Residues His-182 and His-239 each contribute to the a divalent metal cation site. Ser-286 lines the substrate pocket. Residue Asp-313 participates in a divalent metal cation binding. Asn-335 contacts substrate.

Belongs to the metallo-dependent hydrolases superfamily. Hydantoinase/dihydropyrimidinase family. In terms of assembly, homotetramer. Requires a divalent metal cation as cofactor. In terms of processing, carboxylation allows a single lysine to coordinate two divalent metal cations.

It catalyses the reaction D-5-phenylhydantoin + H2O = N-carbamoyl-D-phenylglycine + H(+). Catalyzes the stereospecific hydrolysis of the cyclic amide bond of D-hydantoin derivatives with an aromatic side chains at the 5'-position. Has no activity on dihydropyrimidines. The physiological function is unknown. In Escherichia coli O7:K1 (strain IAI39 / ExPEC), this protein is D-phenylhydantoinase.